The primary structure comprises 356 residues: C-C chemokine receptor type 8 (356 aa).

Residues 1–35 (MDYTLDPSMTTMTDYYYPDSLSSPCDGELIQRNDK) lie on the Extracellular side of the membrane. A helical transmembrane segment spans residues 36 to 63 (LLLAVFYCLLFVFSLLGNSLVILVLVVC). The Cytoplasmic portion of the chain corresponds to 64–73 (KKLRNITDIY). The helical transmembrane segment at 74 to 93 (LLNLALSDLLFVFSFPFQTY) threads the bilayer. Topologically, residues 94 to 107 (YQLDQWVFGTVMCK) are extracellular. An intrachain disulfide couples Cys-106 to Cys-184. A helical transmembrane segment spans residues 108-129 (VVSGFYYIGFYSSMFFITLMSV). Over 130 to 146 (DRYLAVVHAVYAIKVRT) the chain is Cytoplasmic. A helical membrane pass occupies residues 147–172 (IRMGTTTLSLLVWLTAIMATIPLLVF). Topologically, residues 173–203 (YQVASEDGVLQCYSFYNQQTLKWKIFTNFEM) are extracellular. The chain crosses the membrane as a helical span at residues 204-223 (NILGLLIPFTIFMFCYIKIL). The Cytoplasmic portion of the chain corresponds to 224–239 (HQLKRCQNHNKTKAIR). A helical transmembrane segment spans residues 240–264 (LVLIVVIASLLFWVPFNVVLFLTSL). Over 265–281 (HSMHILDGCSISQQLNY) the chain is Extracellular. A helical membrane pass occupies residues 282-305 (ATHVTEIISFTHCCVNPVIYAFVG). The Cytoplasmic portion of the chain corresponds to 306–356 (EKFKKHLSEIFQKSCSHIFIYLGRQMPRESCEKSSSCQQHSFRSSSIDYIL).

The protein belongs to the G-protein coupled receptor 1 family.

The protein localises to the cell membrane. Its function is as follows. Receptor for the chemokines CCL1/SCYA1/I-309. May regulate monocyte chemotaxis and thymic cell line apoptosis. This chain is C-C chemokine receptor type 8 (CCR8), found in Macaca mulatta (Rhesus macaque).